A 1092-amino-acid polypeptide reads, in one-letter code: MPGDEQRERTADDAVTEPSRIARLIAVVAGIAGVLLCGLVPLLPVEETTATVLWPQGVGADGNVTELTAPLVAGAPRALDVTIPCRAVAELPADGGVVFSTNPAGGIEAGRNGMFIRANADVVYVAFRDTVAAVAPREAVDSGACSEIHVWADVSAVGADFAGIPDASGTLPVDKRPQVSGVFTDLKVPAQPGLAARIDIDTRFITSPTLLKTAVMVLGLACVIGSIVALALLDRGWRRRPARTRGRAGLWTWITDTGVIGGLLIWHIVGAPTSDDGYNMTIARVASEAGYTTNYYRYFGASEAPFDWYQSVLSHLASISTAGVWMRLPATAAAIATWLIISRCVLPRIGRRVAANRVAMLTAGATFLAAWLPFNNGLRPEPLIAFAVITVWMLVENSIGTRRLWPAAVAIVIAMFSVTLAPQGLIALAPLLVGARAIGRVVTARRAAPGSWRPCPLAASVAVVFVIIFRDQTLATVAESVRIKYVVGPTIPWYQEFLRYYFLTVEDSVDGSLTRRFAVLVLLLCLFGLIMVLLRRGRVPGAVSGPLWRLCGSTAIGLLLLILTPTKWAIQFGAFAGLAGALGGVTAFAFARVGLHSRRNLALYVTALLFILAWATSGLNGWFYVGNYGVPWFDKQPVIAHYPVTTIFLVLAIVGGLLAGWLHFRMDYAGHTEVADTGRNRALASTPLLIVATIMVVLELGSMVKATVGRYPVYTVGSANIAALRSAGDSCAMADAVLVEADPNEGMLQPVPGQRFGDYGPLGGEDPVGFTPSGVSEHLEPEPVGTNPGTPNSEGPVDKPNIGIAYAGDTGGGYAPEGVNGSRVFLPFGLDPSRTPVMGSYGENKLAAKATSAWYQLPPRTPDRPLVTVAAAGAIWYYEEDGSFNYGQSLKLQWGVHRPDGTYQALSEVQPIDIFQQKAWRNLRFPLAWAPPEANVARIVADDPNLSEDQWCAFTPPRVPVLQTAQQFLGSQTPVLMDIATAANFPCQRPFAERLGVAELPEYRIIPNFKQMVVSSNQWQSAADGGPFLFIQALLRTEAIPTYLRDDWYRDWGSIERYIRVVPQEQAPTAAIEEGSTRVFGWSRGGPIRALP.

13 helical membrane passes run 21 to 43 (IARL…VPLL), 214 to 233 (AVMV…LALL), 249 to 271 (GLWT…IVGA), 324 to 346 (VWMR…RCVL), 353 to 372 (VAAN…AAWL), 382 to 399 (PLIA…ENSI), 404 to 426 (LWPA…QGLI), 517 to 534 (FAVL…MVLL), 541 to 563 (GAVS…LLIL), 568 to 590 (WAIQ…AFAF), 602 to 624 (ALYV…GWFY), 639 to 661 (IAHY…LAGW), and 682 to 704 (ALAS…GSMV). The segment at 772 to 798 (PSGVSEHLEPEPVGTNPGTPNSEGPVD) is disordered.

Belongs to the emb family.

The protein resides in the cell membrane. Its function is as follows. Arabinosyl transferase responsible for the polymerization of arabinose into the arabinan of arabinogalactan. This is Probable arabinosyltransferase A (embA) from Mycolicibacterium smegmatis (Mycobacterium smegmatis).